Reading from the N-terminus, the 3907-residue chain is Cyclo-acetoacetyl-L-tryptophan synthase (3907 aa).

One can recognise a Ketosynthase family 3 (KS3) domain in the interval 2–436 (KTPIAVVGTA…GTNAHAIIES (435 aa)). Residues C176, H313, and H356 each act as for beta-ketoacyl synthase activity in the active site. The interval 555–870 (IFTGQGAQWA…SLLRRGQNDL (316 aa)) is malonyl-CoA:ACP transacylase (MAT) domain. Positions 937 to 1074 (HPLLGRRSAD…ARLTLHLGDA (138 aa)) are N-terminal hotdog fold. A dehydratase (DH) domain region spans residues 937-1236 (HPLLGRRSAD…GLVMKSVPQP (300 aa)). In terms of domain architecture, PKS/mFAS DH spans 937–1239 (HPLLGRRSAD…MKSVPQPDTS (303 aa)). Residues 1092–1239 (LAPVDVADLY…MKSVPQPDTS (148 aa)) form a C-terminal hotdog fold region. Residues 1386 to 1573 (AAMFSQLSKD…FSGIDHIFHD (188 aa)) are methyltransferase (MT) domain. A ketoreductase (KR)domain region spans residues 2064 to 2238 (GTYFMIDMAT…VGSVMALGMV (175 aa)). The tract at residues 2324–2352 (TKEGQYAEQEDSPSLLVPDEQLQESGPGR) is disordered. The Carrier 1 domain maps to 2356–2430 (DDLLARLSGK…LCEKAVPKPN (75 aa)). Residue S2390 is modified to O-(pantetheine 4'-phosphoryl)serine. The interval 2504–2926 (MSPHQSQIWF…SSNPLISVQS (423 aa)) is condensation. Residues 2959–3359 (FQDMVDQYGD…GSLILLGRMD (401 aa)) form an adenylation region. The Carrier 2 domain maps to 3474 to 3549 (KRLTLGEGEL…QMALKVDARK (76 aa)). S3509 carries the O-(pantetheine 4'-phosphoryl)serine modification. A reductase (RED) domain region spans residues 3594-3813 (LTGSTSFLGR…DFQKVEIIAE (220 aa)).

In the C-terminal section; belongs to the NRP synthetase family.

It catalyses the reaction L-tryptophan + malonyl-CoA + acetyl-CoA = cyclo-acetoacetyl-L-tryptophan + CO2 + 2 CoA + H2O. Its pathway is secondary metabolite biosynthesis. In terms of biological role, hybrid PKS-NRPS synthetase; part of the gene cluster that mediates the biosynthesis of the fungal neurotoxin cyclopiazonic acid (CPA), a nanomolar inhibitor of Ca(2+)-ATPase with a unique pentacyclic indole tetramic acid scaffold. The hybrid two module polyketide synthase-nonribosomal peptide synthetase (PKS-NRPS) cpaS incorporates acetyl-CoA, malonyl-CoA, and tryptophan (Trp) and utilizes a C-terminal redox-incompetent reductase domain to make and release the tryptophan tetramic acid, cyclo-acetoacetyl-L-tryptophan (c-AATrp), as the first intermediate in the pathway. CpaS catalyzes a Dieckmann-type cyclization on the N-acetoacetyl-Trp intermediate bound in thioester linkage to the phosphopantetheinyl arm of the T domain to form and release c-AATrp. CpaD then regiospecifically dimethylallylates c-AATrp to form beta-cyclopiazonic acid. CpaD discriminates against free Trp but accepts tryptophan-containing thiohydantoins, diketopiperazines, and linear peptides as substrates for C4-prenylation and also acts as regiospecific O-dimethylallyltransferase (DMAT) on a tyrosine-derived tetramic acid. The beta-cyclopiazonate dehydrogenase cpaO then carries out the dehydrogenation of beta-CPA to yield an unstable enimine product, which is captured by intramolecular cyclization to create the pentacyclic fused scaffold of alpha-cyclopiazonate. Finally, the cytochrome P450 monooxygenase cpaH mediates the conversion of CPA into the less toxic 2-oxocyclopiazonic acid, the end product of the CPA pathway in A.oryza. The chain is Cyclo-acetoacetyl-L-tryptophan synthase from Aspergillus oryzae (Yellow koji mold).